Reading from the N-terminus, the 101-residue chain is Small ribosomal subunit protein uS14 (101 aa).

Positions 1-24 (MAKVSSIKKNEKRKKLSQSLHNKR) are disordered. The segment covering 10–24 (NEKRKKLSQSLHNKR) has biased composition (basic residues).

The protein belongs to the universal ribosomal protein uS14 family. In terms of assembly, part of the 30S ribosomal subunit. Contacts proteins S3 and S10.

Functionally, binds 16S rRNA, required for the assembly of 30S particles and may also be responsible for determining the conformation of the 16S rRNA at the A site. This is Small ribosomal subunit protein uS14 from Rickettsia bellii (strain OSU 85-389).